The sequence spans 509 residues: Putative (R)-citramalate synthase CimA (509 aa).

The Pyruvate carboxyltransferase domain occupies 14–267 (VRIFDTTLRD…DTGIRTERLT (254 aa)).

This sequence belongs to the alpha-IPM synthase/homocitrate synthase family. In terms of assembly, homodimer.

The catalysed reaction is pyruvate + acetyl-CoA + H2O = (3R)-citramalate + CoA + H(+). Its pathway is amino-acid biosynthesis; L-isoleucine biosynthesis; 2-oxobutanoate from pyruvate: step 1/3. Its function is as follows. Catalyzes the condensation of pyruvate and acetyl-coenzyme A to form (R)-citramalate. This chain is Putative (R)-citramalate synthase CimA (cimA), found in Methanopyrus kandleri (strain AV19 / DSM 6324 / JCM 9639 / NBRC 100938).